Here is a 346-residue protein sequence, read N- to C-terminus: N-acetyl-gamma-glutamyl-phosphate reductase (346 aa).

The active site involves Cys-149.

This sequence belongs to the NAGSA dehydrogenase family. Type 1 subfamily.

It localises to the cytoplasm. The catalysed reaction is N-acetyl-L-glutamate 5-semialdehyde + phosphate + NADP(+) = N-acetyl-L-glutamyl 5-phosphate + NADPH + H(+). It participates in amino-acid biosynthesis; L-arginine biosynthesis; N(2)-acetyl-L-ornithine from L-glutamate: step 3/4. In terms of biological role, catalyzes the NADPH-dependent reduction of N-acetyl-5-glutamyl phosphate to yield N-acetyl-L-glutamate 5-semialdehyde. This Citrifermentans bemidjiense (strain ATCC BAA-1014 / DSM 16622 / JCM 12645 / Bem) (Geobacter bemidjiensis) protein is N-acetyl-gamma-glutamyl-phosphate reductase.